The following is a 120-amino-acid chain: NAD(P)H-quinone oxidoreductase subunit 3, chloroplastic (120 aa).

Transmembrane regions (helical) follow at residues 7–27 (YDYFFVFLLIISFFSILIFSL), 64–84 (MFALVFVIFDVETVFLYPWAM), and 89–109 (FGISSFIEALIFILILIIGLV).

Belongs to the complex I subunit 3 family. In terms of assembly, NDH is composed of at least 16 different subunits, 5 of which are encoded in the nucleus.

The protein localises to the plastid. It localises to the chloroplast thylakoid membrane. It carries out the reaction a plastoquinone + NADH + (n+1) H(+)(in) = a plastoquinol + NAD(+) + n H(+)(out). It catalyses the reaction a plastoquinone + NADPH + (n+1) H(+)(in) = a plastoquinol + NADP(+) + n H(+)(out). NDH shuttles electrons from NAD(P)H:plastoquinone, via FMN and iron-sulfur (Fe-S) centers, to quinones in the photosynthetic chain and possibly in a chloroplast respiratory chain. The immediate electron acceptor for the enzyme in this species is believed to be plastoquinone. Couples the redox reaction to proton translocation, and thus conserves the redox energy in a proton gradient. The sequence is that of NAD(P)H-quinone oxidoreductase subunit 3, chloroplastic from Marchantia polymorpha (Common liverwort).